The chain runs to 387 residues: tRNA-specific 2-thiouridylase MnmA (387 aa).

ATP is bound by residues 34–41 (AMSGGVDS) and methionine 60. The Nucleophile role is filled by cysteine 127. Residues cysteine 127 and cysteine 223 are joined by a disulfide bond. Glycine 151 serves as a coordination point for ATP. The tract at residues 173 to 175 (KDQ) is interaction with tRNA. Cysteine 223 serves as the catalytic Cysteine persulfide intermediate.

This sequence belongs to the MnmA/TRMU family.

It is found in the cytoplasm. The catalysed reaction is S-sulfanyl-L-cysteinyl-[protein] + uridine(34) in tRNA + AH2 + ATP = 2-thiouridine(34) in tRNA + L-cysteinyl-[protein] + A + AMP + diphosphate + H(+). Catalyzes the 2-thiolation of uridine at the wobble position (U34) of tRNA, leading to the formation of s(2)U34. This chain is tRNA-specific 2-thiouridylase MnmA, found in Anaplasma marginale (strain St. Maries).